Here is a 319-residue protein sequence, read N- to C-terminus: Acetyl-coenzyme A carboxylase carboxyl transferase subunit alpha (319 aa).

Residues asparagine 35–glutamate 296 enclose the CoA carboxyltransferase C-terminal domain.

This sequence belongs to the AccA family. Acetyl-CoA carboxylase is a heterohexamer composed of biotin carboxyl carrier protein (AccB), biotin carboxylase (AccC) and two subunits each of ACCase subunit alpha (AccA) and ACCase subunit beta (AccD).

The protein localises to the cytoplasm. The enzyme catalyses N(6)-carboxybiotinyl-L-lysyl-[protein] + acetyl-CoA = N(6)-biotinyl-L-lysyl-[protein] + malonyl-CoA. The protein operates within lipid metabolism; malonyl-CoA biosynthesis; malonyl-CoA from acetyl-CoA: step 1/1. In terms of biological role, component of the acetyl coenzyme A carboxylase (ACC) complex. First, biotin carboxylase catalyzes the carboxylation of biotin on its carrier protein (BCCP) and then the CO(2) group is transferred by the carboxyltransferase to acetyl-CoA to form malonyl-CoA. This chain is Acetyl-coenzyme A carboxylase carboxyl transferase subunit alpha, found in Sodalis glossinidius (strain morsitans).